Here is a 100-residue protein sequence, read N- to C-terminus: Urease subunit gamma (100 aa).

Belongs to the urease gamma subunit family. Heterotrimer of UreA (gamma), UreB (beta) and UreC (alpha) subunits. Three heterotrimers associate to form the active enzyme.

The protein localises to the cytoplasm. It catalyses the reaction urea + 2 H2O + H(+) = hydrogencarbonate + 2 NH4(+). Its pathway is nitrogen metabolism; urea degradation; CO(2) and NH(3) from urea (urease route): step 1/1. This is Urease subunit gamma from Rhodopseudomonas palustris (strain ATCC BAA-98 / CGA009).